We begin with the raw amino-acid sequence, 436 residues long: Histidinol dehydrogenase (436 aa).

NAD(+)-binding residues include tyrosine 136, glutamine 198, and asparagine 221. Residues serine 244, glutamine 266, and histidine 269 each coordinate substrate. Zn(2+) contacts are provided by glutamine 266 and histidine 269. Active-site proton acceptor residues include glutamate 334 and histidine 335. 4 residues coordinate substrate: histidine 335, aspartate 368, glutamate 422, and histidine 427. Aspartate 368 is a binding site for Zn(2+). Residue histidine 427 coordinates Zn(2+).

Belongs to the histidinol dehydrogenase family. The cofactor is Zn(2+).

The catalysed reaction is L-histidinol + 2 NAD(+) + H2O = L-histidine + 2 NADH + 3 H(+). It functions in the pathway amino-acid biosynthesis; L-histidine biosynthesis; L-histidine from 5-phospho-alpha-D-ribose 1-diphosphate: step 9/9. In terms of biological role, catalyzes the sequential NAD-dependent oxidations of L-histidinol to L-histidinaldehyde and then to L-histidine. The chain is Histidinol dehydrogenase from Dehalococcoides mccartyi (strain ATCC BAA-2266 / KCTC 15142 / 195) (Dehalococcoides ethenogenes (strain 195)).